Consider the following 292-residue polypeptide: MSTYLIGDVHGCLDELLALLAQVDFDPQHDTLWLTGDLVARGPASLDVLRYVRSLGPAVRMVLGNHDLHLLAVYAGISRNKPKDRITPLLEAPDADELINWLRRQPVLQVDDELKLIMAHAGITPQWDIETAQMCAREVESVLSSDSYPLFLDAMYGDMPNNWSPELTGLARLRFSTNALTRMRFCFPNGQLDMICKDTPENAPAPLKPWFELPRLVSPEYSIIFGHWASLEGKGVPEGIYGLDTGCCWGGNLTLLRWEDKRYFTQPAFKVEAEITNADEIAAAAKDPFSYL.

This sequence belongs to the Ap4A hydrolase family.

It carries out the reaction P(1),P(4)-bis(5'-adenosyl) tetraphosphate + H2O = 2 ADP + 2 H(+). Functionally, hydrolyzes diadenosine 5',5'''-P1,P4-tetraphosphate to yield ADP. The sequence is that of Bis(5'-nucleosyl)-tetraphosphatase, symmetrical from Yersinia enterocolitica serotype O:8 / biotype 1B (strain NCTC 13174 / 8081).